Here is a 208-residue protein sequence, read N- to C-terminus: Outer-membrane lipoprotein carrier protein (208 aa).

The signal sequence occupies residues methionine 1 to alanine 22.

This sequence belongs to the LolA family. Monomer.

It is found in the periplasm. Participates in the translocation of lipoproteins from the inner membrane to the outer membrane. Only forms a complex with a lipoprotein if the residue after the N-terminal Cys is not an aspartate (The Asp acts as a targeting signal to indicate that the lipoprotein should stay in the inner membrane). The polypeptide is Outer-membrane lipoprotein carrier protein (Shewanella woodyi (strain ATCC 51908 / MS32)).